Consider the following 266-residue polypeptide: Putative carbamate hydrolase RutD (266 aa).

Belongs to the AB hydrolase superfamily. Hydrolase RutD family.

The catalysed reaction is carbamate + 2 H(+) = NH4(+) + CO2. In terms of biological role, involved in pyrimidine catabolism. May facilitate the hydrolysis of carbamate, a reaction that can also occur spontaneously. This Escherichia coli O111:H- (strain 11128 / EHEC) protein is Putative carbamate hydrolase RutD.